Here is a 187-residue protein sequence, read N- to C-terminus: Biogenesis of lysosome-related organelles complex 1 subunit 5 (187 aa).

The segment at 1-27 (MSGGGTETPVACEAAQGGGGKKRDSLG) is disordered. Serine 2 carries the N-acetylserine modification.

This sequence belongs to the BLOC1S5 family. In terms of assembly, octamer composed of one copy each BLOC1S1, BLOC1S2, BLOC1S3, BLOC1S4, BLOC1S5, BLOC1S6, DTNBP1/BLOC1S7 and SNAPIN/BLOC1S8. The BLOC-1 complex associates with the AP-3 protein complex and membrane protein cargos. Interacts with BLOC1S4, BLOC1S6, DTNBP1/BLOC1S7 and PI4K2A. Component of the biogenesis of lysosome-related organelles complex 1 (BLOC-1) composed of BLOC1S1, BLOC1S2, BLOC1S3, BLOC1S4, BLOC1S5, BLOC1S6, DTNBP1/BLOC1S7 and SNAPIN/BLOC1S8.

Its function is as follows. Component of the BLOC-1 complex, a complex that is required for normal biogenesis of lysosome-related organelles (LRO), such as platelet dense granules and melanosomes. In concert with the AP-3 complex, the BLOC-1 complex is required to target membrane protein cargos into vesicles assembled at cell bodies for delivery into neurites and nerve terminals. The BLOC-1 complex, in association with SNARE proteins, is also proposed to be involved in neurite extension. Plays a role in intracellular vesicle trafficking. This chain is Biogenesis of lysosome-related organelles complex 1 subunit 5 (Bloc1s5), found in Rattus norvegicus (Rat).